The following is a 245-amino-acid chain: 8-amino-3,8-dideoxy-manno-octulosonate cytidylyltransferase (245 aa).

Belongs to the KdsB family.

Its subcellular location is the cytoplasm. The enzyme catalyses 8-amino-3,8-dideoxy-alpha-D-manno-octulosonate + CTP = CMP-8-amino-3,8-dideoxy-alpha-D-manno-oct-2-ulosonate + diphosphate. It participates in bacterial outer membrane biogenesis; lipopolysaccharide biosynthesis. Its function is as follows. Activates KDO8N (a required 8-carbon sugar) for incorporation into bacterial lipopolysaccharide in the Shewanella genus. The polypeptide is 8-amino-3,8-dideoxy-manno-octulosonate cytidylyltransferase (Shewanella woodyi (strain ATCC 51908 / MS32)).